Reading from the N-terminus, the 833-residue chain is Leucine--tRNA ligase (833 aa).

The short motif at 41 to 52 (PYPSGAGLHVGH) is the 'HIGH' region element. Positions 610-614 (KMSKS) match the 'KMSKS' region motif. Lys-613 provides a ligand contact to ATP.

This sequence belongs to the class-I aminoacyl-tRNA synthetase family.

The protein localises to the cytoplasm. It catalyses the reaction tRNA(Leu) + L-leucine + ATP = L-leucyl-tRNA(Leu) + AMP + diphosphate. In Streptococcus pyogenes serotype M49 (strain NZ131), this protein is Leucine--tRNA ligase.